A 230-amino-acid chain; its full sequence is MAELRYRAGKIKNPRVHKIGVIALGSHLENHGPALPIDTDAKIGAHIAFQASLESGAKFLGIVFPAYELDEIDHGVHVSLDELKANVISTLNSAKKYLDIEKVVIVNSHGGNIPLMTELYDIEDKTDLTIIFNNKIISTEGPHGGSGELSMAKVLGIINEAEIENQTDLSKYEEVGLYGFKQARENDPNIEEGARDVEENGVYVDEVYGKQLFDLAINSVVFDIEKLLDF.

Positions 29, 31, 40, and 109 each coordinate Fe cation.

This sequence belongs to the creatininase superfamily. FAPy deformylase family. Homodimer. It depends on Fe(2+) as a cofactor. The cofactor is Zn(2+).

The enzyme catalyses 2-amino-5-formylamino-6-(5-phospho-D-ribosylamino)pyrimidin-4(3H)-one + H2O = 2,5-diamino-6-(1-D-ribosylamino)pyrimidin-4(3H)-one 5'-phosphate + formate + H(+). It participates in cofactor biosynthesis; coenzyme F420 biosynthesis. It functions in the pathway cofactor biosynthesis; riboflavin biosynthesis. Catalyzes the hydrolysis of the formamide of 2-amino-5-formylamino-6-ribosylamino-4(3H)-pyrimidinone 5'-monophosphate (FAPy) to form 2,5-diamino-6-ribosylamino-4(3H)-pyrimidinone 5'-phosphate (APy). The chain is 2-amino-5-formylamino-6-ribosylaminopyrimidin-4(3H)-one 5'-monophosphate deformylase from Methanobrevibacter smithii (strain ATCC 35061 / DSM 861 / OCM 144 / PS).